We begin with the raw amino-acid sequence, 285 residues long: Bifunctional protein FolD (285 aa).

NADP(+)-binding positions include 165 to 167 (GRS), S190, and I231.

Belongs to the tetrahydrofolate dehydrogenase/cyclohydrolase family. As to quaternary structure, homodimer.

The enzyme catalyses (6R)-5,10-methylene-5,6,7,8-tetrahydrofolate + NADP(+) = (6R)-5,10-methenyltetrahydrofolate + NADPH. The catalysed reaction is (6R)-5,10-methenyltetrahydrofolate + H2O = (6R)-10-formyltetrahydrofolate + H(+). Its pathway is one-carbon metabolism; tetrahydrofolate interconversion. Catalyzes the oxidation of 5,10-methylenetetrahydrofolate to 5,10-methenyltetrahydrofolate and then the hydrolysis of 5,10-methenyltetrahydrofolate to 10-formyltetrahydrofolate. In Magnetococcus marinus (strain ATCC BAA-1437 / JCM 17883 / MC-1), this protein is Bifunctional protein FolD.